Reading from the N-terminus, the 144-residue chain is 3-hydroxyacyl-[acyl-carrier-protein] dehydratase FabZ (144 aa).

His-48 is an active-site residue.

This sequence belongs to the thioester dehydratase family. FabZ subfamily.

The protein resides in the cytoplasm. The catalysed reaction is a (3R)-hydroxyacyl-[ACP] = a (2E)-enoyl-[ACP] + H2O. In terms of biological role, involved in unsaturated fatty acids biosynthesis. Catalyzes the dehydration of short chain beta-hydroxyacyl-ACPs and long chain saturated and unsaturated beta-hydroxyacyl-ACPs. In Bacillus thuringiensis (strain Al Hakam), this protein is 3-hydroxyacyl-[acyl-carrier-protein] dehydratase FabZ.